A 503-amino-acid polypeptide reads, in one-letter code: REST corepressor 2 (503 aa).

The disordered stretch occupies residues 1–62 (MPSVMEKSHG…IPECKPDNTS (62 aa)). Residues 41–126 (SMIRVGSDYQ…RSLADLANFT (86 aa)) enclose the ELM2 domain. The SANT 1 domain occupies 127 to 178 (PFPEEWSVEDKVLFEQAFSFHGKSFQRIQQMLPEKLIPSLVKYYYSWKKTRS). Coiled coils occupy residues 182–206 (VMDR…DQIK) and 286–314 (QLET…SLEG). Residues 327–378 (KLNARWTTDEQLLAVQAVRKYGKDFQAISEVLGNKTPSQVKTFFISYRRRFN) enclose the SANT 2 domain. Residues 385–503 (EWEAEQEPSP…VGSHAESTFS (119 aa)) are disordered. Positions 399 to 412 (TDMSNKTSGSSQTP) are enriched in polar residues. A compositionally biased stretch (low complexity) spans 423-442 (SVSSSSQPAPPAAAAAASLS).

It belongs to the CoREST family.

The protein resides in the nucleus. May act as a component of a corepressor complex that represses transcription. The sequence is that of REST corepressor 2 (rcor2) from Xenopus laevis (African clawed frog).